Reading from the N-terminus, the 205-residue chain is D-alanine--D-alanine ligase (205 aa).

The ATP-grasp domain maps to 111 to 205 (KHVLKSLGID…LGRAIGTMEF (95 aa)). An ATP-binding site is contributed by 139–190 (MPYPFVIKPICGGSTIGVHAIFSRSEYLDLSVHADALEGRMLVEEYIPGQEV).

It belongs to the D-alanine--D-alanine ligase family. Mg(2+) serves as cofactor. Requires Mn(2+) as cofactor.

It is found in the cytoplasm. It catalyses the reaction 2 D-alanine + ATP = D-alanyl-D-alanine + ADP + phosphate + H(+). Its pathway is cell wall biogenesis; peptidoglycan biosynthesis. Functionally, cell wall formation. This is D-alanine--D-alanine ligase (ddl) from Anaplasma centrale.